The following is a 213-amino-acid chain: Imidazole glycerol phosphate synthase subunit HisH (213 aa).

The region spanning 1-212 is the Glutamine amidotransferase type-1 domain; sequence MLAILDYKAG…HRYCTEAADA (212 aa). The Nucleophile role is filled by Cys-79. Catalysis depends on residues His-187 and Glu-189.

Heterodimer of HisH and HisF.

It is found in the cytoplasm. The enzyme catalyses 5-[(5-phospho-1-deoxy-D-ribulos-1-ylimino)methylamino]-1-(5-phospho-beta-D-ribosyl)imidazole-4-carboxamide + L-glutamine = D-erythro-1-(imidazol-4-yl)glycerol 3-phosphate + 5-amino-1-(5-phospho-beta-D-ribosyl)imidazole-4-carboxamide + L-glutamate + H(+). The catalysed reaction is L-glutamine + H2O = L-glutamate + NH4(+). It participates in amino-acid biosynthesis; L-histidine biosynthesis; L-histidine from 5-phospho-alpha-D-ribose 1-diphosphate: step 5/9. Its function is as follows. IGPS catalyzes the conversion of PRFAR and glutamine to IGP, AICAR and glutamate. The HisH subunit catalyzes the hydrolysis of glutamine to glutamate and ammonia as part of the synthesis of IGP and AICAR. The resulting ammonia molecule is channeled to the active site of HisF. The chain is Imidazole glycerol phosphate synthase subunit HisH from Nitratidesulfovibrio vulgaris (strain ATCC 29579 / DSM 644 / CCUG 34227 / NCIMB 8303 / VKM B-1760 / Hildenborough) (Desulfovibrio vulgaris).